We begin with the raw amino-acid sequence, 1083 residues long: Ubiquitin carboxyl-terminal hydrolase 28 (1083 aa).

Residues 60–82 form a disordered region; that stretch reads DQRVKEPSHDTAATEPSEVEESA. Phosphoserine is present on Ser-67. The 20-residue stretch at 97 to 116 folds into the UIM domain; sequence DNKDDLQAAIALSLLESPNI. Lys-99 participates in a covalent cross-link: Glycyl lysine isopeptide (Lys-Gly) (interchain with G-Cter in SUMO2). The USP domain occupies 162–656; sequence VGLKNVGNTC…SAYCLMYIND (495 aa). Cys-171 serves as the catalytic Nucleophile. Ser-376 bears the Phosphoserine mark. The interval 483–539 is disordered; that stretch reads DLTAKESSSPKSCSQNAEGSFSSPEDALPNSEVMNGPFTSPHSSLEMPAPPPAPRTV. Residues 487–505 are compositionally biased toward polar residues; sequence KESSSPKSCSQNAEGSFSS. Ser-556 bears the Phosphoserine mark. His-606 serves as the catalytic Proton acceptor. The interval 703 to 728 is disordered; it reads EEQSCKIPQMESSPNSSSQDFSTSQE. The span at 714-728 shows a compositional bias: low complexity; the sequence is SSPNSSSQDFSTSQE. Position 720 is a phosphoserine (Ser-720). The residue at position 1054 (Thr-1054) is a Phosphothreonine.

The protein belongs to the peptidase C19 family. USP28 subfamily. In terms of assembly, interacts with ZNF304. Interacts with PRKD1. Interacts with TP53BP1. Interacts with FBXW7; following DNA damage, dissociates from FBXW7 leading to degradation of MYC. Post-translationally, degraded upon nickel ion level or hypoxia exposure. In terms of processing, phosphorylated upon DNA damage at Ser-67 and Ser-720, by ATM or ATR. Phosphorylated by PRKD1.

It localises to the nucleus. Its subcellular location is the nucleoplasm. The catalysed reaction is Thiol-dependent hydrolysis of ester, thioester, amide, peptide and isopeptide bonds formed by the C-terminal Gly of ubiquitin (a 76-residue protein attached to proteins as an intracellular targeting signal).. Functionally, deubiquitinase involved in DNA damage response checkpoint and MYC proto-oncogene stability. Involved in DNA damage induced apoptosis by specifically deubiquitinating proteins of the DNA damage pathway such as CLSPN. Also involved in G2 DNA damage checkpoint, by deubiquitinating CLSPN, and preventing its degradation by the anaphase promoting complex/cyclosome (APC/C). In contrast, it does not deubiquitinate PLK1. Specifically deubiquitinates MYC in the nucleoplasm, leading to prevent MYC degradation by the proteasome: acts by specifically interacting with FBXW7 (FBW7alpha) in the nucleoplasm and counteracting ubiquitination of MYC by the SCF(FBXW7) complex. Deubiquitinates ZNF304, hence preventing ZNF304 degradation by the proteasome and leading to the activated KRAS-mediated promoter hypermethylation and transcriptional silencing of tumor suppressor genes (TSGs) in a subset of colorectal cancers (CRC) cells. In Rattus norvegicus (Rat), this protein is Ubiquitin carboxyl-terminal hydrolase 28 (Usp28).